The primary structure comprises 307 residues: Thymidylate synthase (307 aa).

Residues 1-22 (MLVEGSELQSGAQQPRTEAPQH) form a disordered region. Polar residues predominate over residues 7 to 16 (ELQSGAQQPR). R44 contributes to the dUMP binding site. Residue S108 is modified to Phosphoserine. DUMP-binding positions include 169–170 (RR), 189–190 (CH), 209–212 (RSGD), N220, and 250–252 (HIY). The Nucleophile role is filled by C189. D212 is a binding site for (6R)-5,10-methylene-5,6,7,8-tetrahydrofolate. Glycyl lysine isopeptide (Lys-Gly) (interchain with G-Cter in SUMO2) cross-links involve residues K286 and K302. Residue A306 participates in (6R)-5,10-methylene-5,6,7,8-tetrahydrofolate binding.

Belongs to the thymidylate synthase family. In terms of assembly, homodimer.

It localises to the nucleus. It is found in the cytoplasm. Its subcellular location is the mitochondrion. The protein localises to the mitochondrion matrix. The protein resides in the mitochondrion inner membrane. It carries out the reaction dUMP + (6R)-5,10-methylene-5,6,7,8-tetrahydrofolate = 7,8-dihydrofolate + dTMP. The protein operates within pyrimidine metabolism; dTTP biosynthesis. Functionally, catalyzes the reductive methylation of 2'-deoxyuridine 5'-monophosphate (dUMP) to thymidine 5'-monophosphate (dTMP), using the cosubstrate, 5,10- methylenetetrahydrofolate (CH2H4folate) as a 1-carbon donor and reductant and contributes to the de novo mitochondrial thymidylate biosynthesis pathway. In Rattus norvegicus (Rat), this protein is Thymidylate synthase (Tyms).